A 671-amino-acid polypeptide reads, in one-letter code: Receptor-interacting serine/threonine-protein kinase 1 (671 aa).

Serine 6 is subject to Phosphoserine; by IKKA and IKKB. The 273-residue stretch at 17-289 (FLESAELDSG…GIEEKFRPFY (273 aa)) folds into the Protein kinase domain. Position 20 is a phosphoserine; by autocatalysis (serine 20). ATP is bound by residues 23 to 31 (LDSGGFGKV) and lysine 45. Serine 25 bears the Phosphoserine; by IKKA and IKKB mark. The Proton acceptor role is filled by aspartate 138. Residue serine 161 is modified to Phosphoserine; by RIPK3 and autocatalysis. Serine 166 bears the Phosphoserine; by autocatalysis mark. Residues 290–582 (LSQLEESVEE…QAIFDNTTSL (293 aa)) form an interaction with SQSTM1 region. At serine 303 the chain carries Phosphoserine. 3 positions are modified to phosphoserine; by MAP3K7: serine 320, serine 331, and serine 333. Residues 331–348 (SRSNSATEQPGSLHSSQG) are compositionally biased toward polar residues. Residues 331–354 (SRSNSATEQPGSLHSSQGLGMGPV) are disordered. Lysine 377 is covalently cross-linked (Glycyl lysine isopeptide (Lys-Gly) (interchain with G-Cter in ubiquitin)). At tyrosine 384 the chain carries Phosphotyrosine. The segment at 389–455 (SRMDRQTKQQ…GNAVHQPSGL (67 aa)) is disordered. Over residues 428 to 444 (NFQNTEGKGTAYSSAAS) the composition is skewed to polar residues. The short motif at 531–547 (YTIYNSTGIQIGAYNYM) is the RIP homotypic interaction motif (RHIM) element. Positions 583–669 (TDKHLDPIRE…DLLSSLIYVS (87 aa)) constitute a Death domain. Residue arginine 603 is glycosylated ((Microbial infection) N-beta-linked (GlcNAc) arginine).

This sequence belongs to the protein kinase superfamily. TKL Ser/Thr protein kinase family. In terms of assembly, homodimer. Interacts (via RIP homotypic interaction motif) with RIPK3 (via RIP homotypic interaction motif); this interaction induces RIPK1 phosphorylation and formation of a RIPK1-RIPK3 necroptosis-inducing complex. Upon TNF-induced necrosis, the RIPK1-RIPK3 dimer further interacts with PGAM5 and MLKL; the formation of this complex leads to PGAM5 phosphorylation and increase in PGAM5 phosphatase activity. Interacts (via the death domain) with TNFRSF6 (via the death domain) and TRADD (via the death domain). Is recruited by TRADD to TNFRSF1A in a TNF-dependent process. Binds RNF216, EGFR, IKBKG, TRAF1, TRAF2 and TRAF3. Interacts with BNLF1. Interacts with SQSTM1 upon TNF-alpha stimulation. May interact with MAVS/IPS1. Interacts with ZFAND5. Interacts with RBCK1. Interacts with ZBP1. Interacts with BIRC2/c-IAP1, BIRC3/c-IAP2 and XIAP/BIRC4. Interacts (via kinase domain) with DAB2IP (via Ras-GAP domain); the interaction occurs in a TNF-alpha-dependent manner. Interacts with ARHGEF2. Interacts (via protein kinase domain) with RFFL; involved in RIPK1 ubiquitination. Interacts with RNF34; involved in RIPK1 ubiquitination. Interacts with TICAM1 and this interaction is enhanced in the presence of WDFY1. Interacts with PELI1. Interacts (via death domain) with CRADD (via death domain); the interaction is direct. Component of complex IIa composed of at least RIPK1, FADD and CASP8. Component of the AIM2 PANoptosome complex, a multiprotein complex that drives inflammatory cell death (PANoptosis). Interacts with MAP3K7, CFLAR, CASP8, FADD and NEMO. Interacts with TAX1BP1; this interaction negatively regulates RIPK1 ubiquitination. Interacts with GRB2. Interacts with DDX24; this interaction disrupts RLR signaling activation of IFN-dependent transcription factor IRF7. (Microbial infection) Interacts with mumps virus protein SH; this interaction inhibits downstream NF-kappa-B pathway activation. As to quaternary structure, (Microbial infection) Interacts with Murid herpesvirus 1 protein RIR1. In terms of assembly, (Microbial infection) Interacts (via RIP homotypic interaction motif) with herpes simplex virus 1/HHV-1 protein RIR1/ICP6 (via RIP homotypic interaction motif); this interaction prevents necroptosis activation. (Microbial infection) Interacts (via RIP homotypic interaction motif) with herpes simplex virus 2/HHV-2 protein RIR1/ICP10 (via RIP homotypic interaction motif); this interaction prevents necroptosis activation. In terms of processing, (Microbial infection) Proteolytically cleaved by S.flexneri OspD3 within the RIP homotypic interaction motif (RHIM), leading to its degradation and inhibition of necroptosis. Post-translationally, proteolytically cleaved by CASP8 at Asp-324. Cleavage is crucial for limiting TNF-induced apoptosis, necroptosis and inflammatory response. Cleavage abolishes NF-kappa-B activation and enhances the interaction of TRADD with FADD. Proteolytically cleaved by CASP6 during intrinsic apoptosis. RIPK1 and RIPK3 undergo reciprocal auto- and trans-phosphorylation. Phosphorylation of Ser-161 by RIPK3 is necessary for the formation of the necroptosis-inducing complex. Phosphorylation at Ser-25 represses its kinase activity and consequently prevents TNF-mediated RIPK1-dependent cell death. Phosphorylated at Ser-320 by MAP3K7 which requires prior ubiquitination with 'Lys-63'-linked chains by BIRC2/c-IAP1 and BIRC3/c-IAP2. This phosphorylation positively regulates RIPK1 interaction with RIPK3 to promote necroptosis but negatively regulates RIPK1 kinase activity and its interaction with FADD to mediate apoptosis. In terms of processing, deubiquitinated by USP7; this modification is required for TNF-alpha-induced apoptosis. Post-translationally, ubiquitinated with 'Lys-11'-, 'Lys-48'-, 'Lys-63'- and linear-linked type ubiquitin. Polyubiquitination with 'Lys-63'-linked chains by TRAF2 induces association with the IKK complex. Deubiquitination of 'Lys-63'-linked chains and polyubiquitination with 'Lys-48'-linked chains by TNFAIP3 leads to RIPK1 proteasomal degradation and consequently down-regulates TNF-alpha-induced NF-kappa-B signaling. 'Lys-48'-linked polyubiquitination by RFFL or RNF34 also promotes proteasomal degradation and negatively regulates TNF-alpha-induced NF-kappa-B signaling. Linear polyubiquitinated; the head-to-tail linear polyubiquitination ('Met-1'-linked) is mediated by the LUBAC complex and decreases protein kinase activity. Deubiquitination of linear polyubiquitin by CYLD promotes the kinase activity. Polyubiquitinated with 'Lys-48' and 'Lys-63'-linked chains by BIRC2/c-IAP1 and BIRC3/c-IAP2, leading to activation of NF-kappa-B. Ubiquitinated with 'Lys-63'-linked chains by PELI1. Ubiquitination at Lys-377 with 'Lys-63'-linked chains by BIRC2/c-IAP1 and BIRC3/c-IAP2 is essential for its phosphorylation at Ser-320 mediated by MAP3K7. This ubiquitination is required for NF-kB activation, suppresses RIPK1 kinase activity and plays a critical role in preventing cell death during embryonic development. (Microbial infection) Glycosylated at Arg-603 by enteropathogenic E.coli protein NleB1: arginine GlcNAcylation prevents homotypic/heterotypic death domain interactions.

It localises to the cytoplasm. The protein localises to the cell membrane. It catalyses the reaction L-seryl-[protein] + ATP = O-phospho-L-seryl-[protein] + ADP + H(+). The catalysed reaction is L-threonyl-[protein] + ATP = O-phospho-L-threonyl-[protein] + ADP + H(+). Serine-threonine kinase activity is inhibited by linear polyubiquitination ('Met-1'-linked) by the LUBAC complex. Inhibited by necrostatins, including necrostatin-1, necrostatin-3 and necrostatin-4. Functionally, serine-threonine kinase which is a key regulator of TNF-mediated apoptosis, necroptosis and inflammatory pathways. Exhibits kinase activity-dependent functions that regulate cell death and kinase-independent scaffold functions regulating inflammatory signaling and cell survival. Has kinase-independent scaffold functions: upon binding of TNF to TNFR1, RIPK1 is recruited to the TNF-R1 signaling complex (TNF-RSC also known as complex I) where it acts as a scaffold protein promoting cell survival, in part, by activating the canonical NF-kappa-B pathway. Kinase activity is essential to regulate necroptosis and apoptosis, two parallel forms of cell death: upon activation of its protein kinase activity, regulates assembly of two death-inducing complexes, namely complex IIa (RIPK1-FADD-CASP8), which drives apoptosis, and the complex IIb (RIPK1-RIPK3-MLKL), which drives necroptosis. RIPK1 is required to limit CASP8-dependent TNFR1-induced apoptosis. In normal conditions, RIPK1 acts as an inhibitor of RIPK3-dependent necroptosis, a process mediated by RIPK3 component of complex IIb, which catalyzes phosphorylation of MLKL upon induction by ZBP1. Inhibits RIPK3-mediated necroptosis via FADD-mediated recruitment of CASP8, which cleaves RIPK1 and limits TNF-induced necroptosis. Required to inhibit apoptosis and necroptosis during embryonic development: acts by preventing the interaction of TRADD with FADD thereby limiting aberrant activation of CASP8. In addition to apoptosis and necroptosis, also involved in inflammatory response by promoting transcriptional production of pro-inflammatory cytokines, such as interleukin-6 (IL6). Phosphorylates RIPK3: RIPK1 and RIPK3 undergo reciprocal auto- and trans-phosphorylation. Phosphorylates DAB2IP at 'Ser-728' in a TNF-alpha-dependent manner, and thereby activates the MAP3K5-JNK apoptotic cascade. Required for ZBP1-induced NF-kappa-B activation in response to DNA damage. This Homo sapiens (Human) protein is Receptor-interacting serine/threonine-protein kinase 1.